Here is a 307-residue protein sequence, read N- to C-terminus: Nicotinamide/nicotinic acid mononucleotide adenylyltransferase 2 (307 aa).

NAD(+) is bound by residues Ser-16 and Phe-17. His-24 contacts ATP. Residues Trp-92 and Thr-95 each coordinate NAD(+). S-palmitoyl cysteine attachment occurs at residues Cys-164 and Cys-165. Residues Gly-200, Asp-202, Leu-212, Trp-213, and Arg-232 each coordinate NAD(+). 271 to 274 contributes to the ATP binding site; sequence TKSR.

The protein belongs to the eukaryotic NMN adenylyltransferase family. In terms of assembly, monomer. It depends on Mg(2+) as a cofactor. Post-translationally, degraded in response to injured neurite. Degradation is caused by polyubiquitination by MYCBP2 after recognition by FBXO45. In terms of processing, palmitoylated; palmitoylation is required for membrane association.

The protein localises to the golgi apparatus membrane. The protein resides in the cytoplasmic vesicle membrane. It localises to the cytoplasm. It is found in the cell projection. Its subcellular location is the axon. The enzyme catalyses beta-nicotinamide D-ribonucleotide + ATP + H(+) = diphosphate + NAD(+). It carries out the reaction nicotinate beta-D-ribonucleotide + ATP + H(+) = deamido-NAD(+) + diphosphate. Its pathway is cofactor biosynthesis; NAD(+) biosynthesis; NAD(+) from nicotinamide D-ribonucleotide: step 1/1. It participates in cofactor biosynthesis; NAD(+) biosynthesis; deamido-NAD(+) from nicotinate D-ribonucleotide: step 1/1. With respect to regulation, inhibited by P1-(adenosine-5')-P3-(nicotinamide-riboside-5')-triphosphate (Np3AD) and P1-(adenosine-5')-P4-(nicotinamide-riboside-5')-tetraphosphate (Np4AD). In terms of biological role, nicotinamide/nicotinate-nucleotide adenylyltransferase that acts as an axon maintenance factor. Axon survival factor required for the maintenance of healthy axons: acts by delaying Wallerian axon degeneration, an evolutionarily conserved process that drives the loss of damaged axons. Catalyzes the formation of NAD(+) from nicotinamide mononucleotide (NMN) and ATP. Can also use the deamidated form; nicotinic acid mononucleotide (NaMN) as substrate but with a lower efficiency. Cannot use triazofurin monophosphate (TrMP) as substrate. Also catalyzes the reverse reaction, i.e. the pyrophosphorolytic cleavage of NAD(+). For the pyrophosphorolytic activity prefers NAD(+), NADH and NaAD as substrates and degrades nicotinic acid adenine dinucleotide phosphate (NHD) less effectively. Fails to cleave phosphorylated dinucleotides NADP(+), NADPH and NaADP(+). Also acts as an activator of ADP-ribosylation by supporting the catalytic activity of PARP16 and promoting mono-ADP-ribosylation of ribosomes by PARP16. May be involved in the maintenance of axonal integrity. This is Nicotinamide/nicotinic acid mononucleotide adenylyltransferase 2 (NMNAT2) from Pongo abelii (Sumatran orangutan).